The sequence spans 262 residues: Triosephosphate isomerase (262 aa).

A substrate-binding site is contributed by 9–11 (NWK). Histidine 99 functions as the Electrophile in the catalytic mechanism. Glutamate 171 serves as the catalytic Proton acceptor. Positions 177 and 216 each coordinate substrate.

This sequence belongs to the triosephosphate isomerase family. In terms of assembly, homodimer.

The protein localises to the cytoplasm. It catalyses the reaction D-glyceraldehyde 3-phosphate = dihydroxyacetone phosphate. It functions in the pathway carbohydrate biosynthesis; gluconeogenesis. Its pathway is carbohydrate degradation; glycolysis; D-glyceraldehyde 3-phosphate from glycerone phosphate: step 1/1. Involved in the gluconeogenesis. Catalyzes stereospecifically the conversion of dihydroxyacetone phosphate (DHAP) to D-glyceraldehyde-3-phosphate (G3P). This Blochmanniella floridana protein is Triosephosphate isomerase.